Reading from the N-terminus, the 46-residue chain is Iota-conotoxin-like Fi11.8 (46 aa).

2 positions are modified to 4-hydroxyproline: P2 and P11. 4 disulfide bridges follow: C5–C19, C12–C22, C18–C27, and C21–C38. 4-hydroxyproline is present on P29. The residue at position 33 (W33) is a 6'-bromotryptophan. F44 carries the D-phenylalanine modification.

The protein belongs to the conotoxin I1 superfamily. Expressed by the venom duct.

The protein resides in the secreted. Iota-conotoxins bind to voltage-gated sodium channels (Nav) and act as agonists by shifting the voltage-dependence of activation to more hyperpolarized levels. Produces general excitatory symptoms. The chain is Iota-conotoxin-like Fi11.8 from Conus figulinus (Fig cone).